Consider the following 203-residue polypeptide: Orotate phosphoribosyltransferase (203 aa).

5-phospho-alpha-D-ribose 1-diphosphate-binding positions include R94, K98, H100, and 120 to 128 (EDLISTGGS). S124 is a binding site for orotate.

The protein belongs to the purine/pyrimidine phosphoribosyltransferase family. PyrE subfamily. As to quaternary structure, homodimer. Requires Mg(2+) as cofactor.

It carries out the reaction orotidine 5'-phosphate + diphosphate = orotate + 5-phospho-alpha-D-ribose 1-diphosphate. The protein operates within pyrimidine metabolism; UMP biosynthesis via de novo pathway; UMP from orotate: step 1/2. Its function is as follows. Catalyzes the transfer of a ribosyl phosphate group from 5-phosphoribose 1-diphosphate to orotate, leading to the formation of orotidine monophosphate (OMP). The protein is Orotate phosphoribosyltransferase of Staphylococcus aureus (strain Mu50 / ATCC 700699).